The chain runs to 744 residues: Palmitoyltransferase ZDHHC5-A (744 aa).

Positions Met1–Ser11 are enriched in gly residues. The interval Met1 to Pro25 is disordered. Over Met1–Arg30 the chain is Cytoplasmic. A helical transmembrane segment spans residues Tyr31–Phe51. Over Thr52–Ser61 the chain is Extracellular. The helical transmembrane segment at Val62–Ala82 threads the bilayer. The Cytoplasmic segment spans residues Thr83–Phe167. The DHHC domain maps to Lys121–Leu171. Catalysis depends on Cys151, which acts as the S-palmitoyl cysteine intermediate. The chain crosses the membrane as a helical span at residues Leu168 to Ile188. Over Leu189–Cys208 the chain is Extracellular. Residues Val209–Ala229 form a helical membrane-spanning segment. Over Arg230–Val744 the chain is Cytoplasmic. Disordered regions lie at residues Ser314–Gly523, Gln556–Tyr645, and Ser664–Val744. Residues Thr369 to Gly393 are compositionally biased toward polar residues. A compositionally biased stretch (basic and acidic residues) spans Pro398–Ala413. The segment covering Arg415 to Ile428 has biased composition (gly residues). Residues Thr460–Glu501 are compositionally biased toward polar residues. Residues Pro571–Ala584 are compositionally biased toward basic and acidic residues. The segment covering Gln585–Arg601 has biased composition (basic residues). Low complexity-rich tracts occupy residues Arg621–Pro630 and Pro689–His723. The span at Pro725–Gly737 shows a compositional bias: gly residues.

This sequence belongs to the DHHC palmitoyltransferase family. ERF2/ZDHHC9 subfamily.

The protein localises to the cell membrane. The enzyme catalyses L-cysteinyl-[protein] + hexadecanoyl-CoA = S-hexadecanoyl-L-cysteinyl-[protein] + CoA. Palmitoyltransferase that catalyzes the addition of palmitate onto various protein substrates and is involved in a variety of cellular processes. The protein is Palmitoyltransferase ZDHHC5-A of Danio rerio (Zebrafish).